The following is an 881-amino-acid chain: Interference hedgehog (881 aa).

The first 26 residues, 1–26 (MSSSSSSLLLMMLLLLLLLLTSKLEA), serve as a signal peptide directing secretion. The Extracellular portion of the chain corresponds to 27–693 (IPVLSSTSPS…NHNETYSLNP (667 aa)). 4 consecutive Ig-like C2-type domains span residues 37–138 (PGVR…IARL), 128–228 (PLVV…IPSS), 242–330 (PYLL…YINV), and 336–425 (PVIV…LQVN). Intrachain disulfides connect cysteine 60–cysteine 122, cysteine 167–cysteine 212, and cysteine 266–cysteine 314. 9 N-linked (GlcNAc...) asparagine glycosylation sites follow: asparagine 75, asparagine 98, asparagine 194, asparagine 201, asparagine 282, asparagine 349, asparagine 381, asparagine 430, and asparagine 455. A disulfide bridge connects residues cysteine 358 and cysteine 407. 2 Fibronectin type-III domains span residues 450 to 558 (PPSA…LQRG) and 566 to 661 (VPEL…TQRS). The heparin site is built by arginine 486, lysine 492, and lysine 494. N-linked (GlcNAc...) asparagine glycosylation is present at asparagine 517. Residue arginine 532 coordinates heparin. N-linked (GlcNAc...) asparagine glycosylation is present at asparagine 548. Positions 655–685 (QGRTQRSKLTTTEQPIQQKGGDRNVNTTPNH) are disordered. Polar residues predominate over residues 656-671 (GRTQRSKLTTTEQPIQ). The N-linked (GlcNAc...) asparagine glycan is linked to asparagine 686. The helical transmembrane segment at 694–714 (LLTGTIGGGALLLLLLIAFSF) threads the bilayer. The Cytoplasmic segment spans residues 715–881 (CLCRRKNRNG…SSGSLNSVGV (167 aa)). 2 disordered regions span residues 768 to 791 (NPLD…NSPH) and 809 to 881 (PTTY…SVGV). Polar residues predominate over residues 837–855 (PGSNNNLQQIGSETTTTGQ). Positions 865–881 (SSRSENLSSGSLNSVGV) are enriched in low complexity.

The protein belongs to the immunoglobulin superfamily. IHOG family. Homodimer. Heterotetramer; 2 iHog chains bind 2 hh chains when facilitated by heparin, heparin is required to promote high-affinity interactions between hh and iHog.

Its subcellular location is the membrane. In terms of biological role, mediates response to the active Hedgehog (Hh) protein signal in embryos, functioning upstream or at the level of patched (ptc). This Drosophila willistoni (Fruit fly) protein is Interference hedgehog.